The following is a 440-amino-acid chain: Ribosomal protein uS12 methylthiotransferase RimO (440 aa).

The MTTase N-terminal domain maps to 6-116 (PKVGFVSLGC…VVTAVHEVVP (111 aa)). Residues cysteine 15, cysteine 51, cysteine 80, cysteine 149, cysteine 153, and cysteine 156 each coordinate [4Fe-4S] cluster. The region spanning 135–373 (LTPRHYAYLK…MAHQQAISAA (239 aa)) is the Radical SAM core domain. The TRAM domain occupies 376–440 (QLKVGKEIEV…DEYDLWAEPV (65 aa)).

Belongs to the methylthiotransferase family. RimO subfamily. Requires [4Fe-4S] cluster as cofactor.

It is found in the cytoplasm. It catalyses the reaction L-aspartate(89)-[ribosomal protein uS12]-hydrogen + (sulfur carrier)-SH + AH2 + 2 S-adenosyl-L-methionine = 3-methylsulfanyl-L-aspartate(89)-[ribosomal protein uS12]-hydrogen + (sulfur carrier)-H + 5'-deoxyadenosine + L-methionine + A + S-adenosyl-L-homocysteine + 2 H(+). Functionally, catalyzes the methylthiolation of an aspartic acid residue of ribosomal protein uS12. The protein is Ribosomal protein uS12 methylthiotransferase RimO of Pseudomonas paraeruginosa (strain DSM 24068 / PA7) (Pseudomonas aeruginosa (strain PA7)).